The sequence spans 232 residues: 7-cyano-7-deazaguanine synthase (232 aa).

7–17 (LSGGLDSTVVT) contacts ATP. Zn(2+) is bound by residues cysteine 195, cysteine 206, cysteine 209, and cysteine 212.

This sequence belongs to the QueC family. The cofactor is Zn(2+).

It catalyses the reaction 7-carboxy-7-deazaguanine + NH4(+) + ATP = 7-cyano-7-deazaguanine + ADP + phosphate + H2O + H(+). Its pathway is purine metabolism; 7-cyano-7-deazaguanine biosynthesis. Functionally, catalyzes the ATP-dependent conversion of 7-carboxy-7-deazaguanine (CDG) to 7-cyano-7-deazaguanine (preQ(0)). The chain is 7-cyano-7-deazaguanine synthase from Methanocaldococcus jannaschii (strain ATCC 43067 / DSM 2661 / JAL-1 / JCM 10045 / NBRC 100440) (Methanococcus jannaschii).